The primary structure comprises 53 residues: Dihydrolipoyl dehydrogenase (53 aa).

Residues 35 to 44 (EKYPTFGGTC) and Lys53 contribute to the FAD site. An intrachain disulfide couples Cys44 to Cys49.

This sequence belongs to the class-I pyridine nucleotide-disulfide oxidoreductase family. As to quaternary structure, homodimer. FAD is required as a cofactor.

It is found in the mitochondrion. The enzyme catalyses N(6)-[(R)-dihydrolipoyl]-L-lysyl-[protein] + NAD(+) = N(6)-[(R)-lipoyl]-L-lysyl-[protein] + NADH + H(+). Lipoamide reduction and the NADH -&gt; NAD reaction are both completely inhibited by copper and cadmium ions. Lipoamide dehydrogenase is a component of the glycine cleavage system as well as of the alpha-ketoacid dehydrogenase complexes. This enzyme has lipoamide dehydrogenase activity and NADH -&gt; NAD transhydrogenation activity. Also displays some NADH-ferricyanide reductase and NADPH -&gt; NAD transydrogenation activities. The protein is Dihydrolipoyl dehydrogenase of Hymenolepis diminuta (Rat tapeworm).